The following is a 75-amino-acid chain: Conotoxin VnMKLT2-012 (75 aa).

Positions 1–23 (MMKLTCVLIIAVLFLTACQLTTA) are cleaved as a signal peptide. Positions 24–45 (ETRDEYRAVRSSDEVRNSRSTR) are excised as a propeptide. Positions 31–45 (AVRSSDEVRNSRSTR) are enriched in basic and acidic residues. Residues 31–50 (AVRSSDEVRNSRSTRDCSGS) form a disordered region. Disulfide bonds link C47–C60, C54–C65, and C59–C74.

Belongs to the conotoxin O1 superfamily. As to expression, expressed by the venom duct.

The protein resides in the secreted. The protein is Conotoxin VnMKLT2-012 of Conus ventricosus (Mediterranean cone).